The following is a 450-amino-acid chain: E3 ubiquitin-protein ligase XB3 (450 aa).

ANK repeat units lie at residues 11-40 (GDEH…SLAR), 46-75 (DRLS…PPDA), 79-108 (HKQT…NILM), 113-142 (HART…TTPV), 158-187 (HGAT…IVSA), and 195-225 (PGST…RLQR). Residues 291–312 (ILNGTKYSLPSPSPGDDSADDD) are disordered. Residues 323–372 (CCICFDQACTIEVQDCGHQMCAPCTLALCCHNKPNPTTLTPPSPACPFCR) form an RING-type zinc finger. The segment at 385–450 (SACDPDKPSS…SNLDKPEHDL (66 aa)) is disordered.

Interacts (via ankyrin repeats) with XA21. In terms of processing, phosphorylated by XA21.

It catalyses the reaction S-ubiquitinyl-[E2 ubiquitin-conjugating enzyme]-L-cysteine + [acceptor protein]-L-lysine = [E2 ubiquitin-conjugating enzyme]-L-cysteine + N(6)-ubiquitinyl-[acceptor protein]-L-lysine.. Its pathway is protein modification; protein ubiquitination. Its function is as follows. E3 ubiquitin-protein ligase required for full accumulation of the LRR receptor kinase XA21 and XA21-mediated disease resistance. Binding to XA21 may stabilize the receptor kinase and maintain its protein level. Autoubiquitinated in vitro. The sequence is that of E3 ubiquitin-protein ligase XB3 (XB3) from Oryza sativa subsp. japonica (Rice).